A 474-amino-acid chain; its full sequence is MLSKIELMLLRSLETGKTYTPEEAAELSGLSKDAVLKAAYMLQERGYVRVIENVRTHYSLTEEGERYLKEGLPEEKLYSLVKSGVNSMDELRKRMGREFQIALGWLRRKGAVEVEGDKVVPKREPSFDERAALQAIKEGRGVDEGTLKTLMKRKLVTKSETKQVYIEVMKKPEIELEDIITDLTPEMLLEGTWRGKQFLKYDITIPAKEIYGGKIHPYERIIEECRKVFLEMGFTEIKGHYVQPAFWNFDALFQPQDHPARDMQDTFYLDRYIDLEGEIVERVKATHENGWITGSTGWGGEWSLEKARQLVLRTHTTAITIHYLAENPEPPQKAFCIDRVYRRETIDATHLPEFDQLEGVVLDRDVGFKHLLGLLKEFFTKMGFEDVRFRPGYFPYTEPSVEPEVYVEGLGWVELGGAGVFRKEVTEPLGIRGKVLAWGLGIGRLAMLKIGLKDLRRLYLPDLGWLRSMPVARK.

Residues T317, 356 to 358 (QLE), and Y396 contribute to the L-phenylalanine site. E398 serves as a coordination point for Mg(2+). F421 provides a ligand contact to L-phenylalanine.

It belongs to the class-II aminoacyl-tRNA synthetase family. Phe-tRNA synthetase alpha subunit type 2 subfamily. As to quaternary structure, tetramer of two alpha and two beta subunits. Mg(2+) is required as a cofactor.

The protein localises to the cytoplasm. The catalysed reaction is tRNA(Phe) + L-phenylalanine + ATP = L-phenylalanyl-tRNA(Phe) + AMP + diphosphate + H(+). In Archaeoglobus fulgidus (strain ATCC 49558 / DSM 4304 / JCM 9628 / NBRC 100126 / VC-16), this protein is Phenylalanine--tRNA ligase alpha subunit.